A 195-amino-acid chain; its full sequence is Large ribosomal subunit protein bL17 (195 aa).

Residues 125–195 (ANRARRVGAS…PTQDSDADKS (71 aa)) form a disordered region. Over residues 136-152 (QTAPVAAAAAPQAAVEP) the composition is skewed to low complexity. 2 stretches are compositionally biased toward acidic residues: residues 153 to 173 (EATE…EDTT) and 183 to 195 (TDDP…ADKS).

Belongs to the bacterial ribosomal protein bL17 family. Part of the 50S ribosomal subunit. Contacts protein L32.

This chain is Large ribosomal subunit protein bL17, found in Mycobacterium sp. (strain JLS).